A 183-amino-acid chain; its full sequence is Capsid protein (183 aa).

Residues 136 to 183 (NAPILSTLPETTVVRRRGRSPRRRTPSPRRRRSQSPRRRRSQSRESQC) are disordered. Basic residues predominate over residues 149–176 (VRRRGRSPRRRTPSPRRRRSQSPRRRRS). A phosphoserine; by host mark is found at Ser155, Ser162, and Ser170. One copy of the 1; half-length repeat lies at 155–161 (SPRRRTP). Positions 155-177 (SPRRRTPSPRRRRSQSPRRRRSQ) are 3 X 8 AA repeats of S-P-R-R-R-[PR]-S-Q. Residues 158–175 (RRTPSPRRRRSQSPRRRR) carry the Bipartite nuclear localization signal motif. Repeat copies occupy residues 162 to 169 (SPRRRRSQ) and 170 to 177 (SPRRRRSQ). The interval 177–183 (QSRESQC) is RNA binding.

Belongs to the orthohepadnavirus core antigen family. As to quaternary structure, homodimerizes, then multimerizes. Interacts with cytosol exposed regions of viral L glycoprotein present in the reticulum-to-Golgi compartment. Interacts with human FLNB. Phosphorylated form interacts with host importin alpha; this interaction depends on the exposure of the NLS, which itself depends upon genome maturation and/or phosphorylation of the capsid protein. Interacts with host NUP153. Phosphorylated by host SRPK1, SRPK2, and maybe protein kinase C or GAPDH. Phosphorylation is critical for pregenomic RNA packaging. Protein kinase C phosphorylation is stimulated by HBx protein and may play a role in transport of the viral genome to the nucleus at the late step during the viral replication cycle.

It is found in the virion. Its subcellular location is the host cytoplasm. Its function is as follows. Self assembles to form an icosahedral capsid. Most capsids appear to be large particles with an icosahedral symmetry of T=4 and consist of 240 copies of capsid protein, though a fraction forms smaller T=3 particles consisting of 180 capsid proteins. Entering capsids are transported along microtubules to the nucleus. Phosphorylation of the capsid is thought to induce exposure of nuclear localization signal in the C-terminal portion of the capsid protein that allows binding to the nuclear pore complex via the importin (karyopherin-) alpha and beta. Capsids are imported in intact form through the nuclear pore into the nuclear basket, where it probably binds NUP153. Only capsids that contain the mature viral genome can release the viral DNA and capsid protein into the nucleoplasm. Immature capsids get stuck in the basket. Capsids encapsulate the pre-genomic RNA and the P protein. Pre-genomic RNA is reverse-transcribed into DNA while the capsid is still in the cytoplasm. The capsid can then either be directed to the nucleus, providing more genomes for transcription, or bud through the endoplasmic reticulum to provide new virions. This chain is Capsid protein, found in Hepatitis B virus genotype B1 subtype adw (isolate Japan/pJDW233/1988) (HBV-B).